The primary structure comprises 731 residues: Gelsolin (731 aa).

The tract at residues Val-2–Phe-125 is actin-severing. The stretch at Phe-25 to Leu-107 is one Gelsolin-like 1 repeat. Residue Tyr-35 is modified to Phosphotyrosine. 6 residues coordinate Ca(2+): Gly-41, Asp-42, Glu-73, Asp-85, Gly-90, and Ala-92. The segment at Asp-72–Gly-75 is actin-actin interfilament contact point. Lys-111–Lys-118 contributes to the a 1,2-diacyl-sn-glycero-3-phospho-(1D-myo-inositol-4,5-bisphosphate) binding site. Residue Val-121 participates in Ca(2+) binding. Arg-137–Arg-145 is a binding site for a 1,2-diacyl-sn-glycero-3-phospho-(1D-myo-inositol-4,5-bisphosphate). The stretch at Val-147–Met-219 is one Gelsolin-like 2 repeat. Positions 162 and 163 each coordinate Ca(2+). Residues Cys-164 and Cys-177 are joined by a disulfide bond. A Ca(2+)-binding site is contributed by Glu-185. Basic and acidic residues predominate over residues Arg-197–Glu-211. The tract at residues Arg-197–Pro-216 is disordered. Residues Asp-235, Glu-278, Asp-279, and Glu-303 each coordinate Ca(2+). One copy of the Gelsolin-like 3 repeat lies at Asp-266–Phe-338. Phosphotyrosine is present on residues Tyr-358 and Tyr-414. The segment at Ala-383–Ala-731 is actin-binding, Ca-sensitive. Residues Ser-404–Met-485 form a Gelsolin-like 4 repeat. Residues Gly-420, Asp-421, Glu-451, Asp-463, Gly-468, Pro-470, and Thr-500 each coordinate Ca(2+). A Gelsolin-like 5 repeat occupies Ala-527 to Trp-591. Position 533 is an N6-acetyllysine (Lys-533). The Ca(2+) site is built by Asn-540 and Asp-541. Tyr-552 is modified (phosphotyrosine). Residue Glu-563 participates in Ca(2+) binding. The residue at position 600 (Tyr-600) is a Phosphotyrosine. The Gelsolin-like 6 repeat unit spans residues Ile-630–Phe-705. Ca(2+) contacts are provided by Asp-645, Asp-646, and Glu-668. Residue Thr-691 is modified to Phosphothreonine.

The protein belongs to the villin/gelsolin family. Binds to actin and to fibronectin. Identified in a complex composed of ACTA1, COBL, GSN and TMSB4X. Interacts with the inactive form of EIF2AK2/PKR. Interacts with FLII.

Its subcellular location is the cytoplasm. It is found in the cytoskeleton. In terms of biological role, calcium-regulated, actin-modulating protein that binds to the plus (or barbed) ends of actin monomers or filaments, preventing monomer exchange (end-blocking or capping). It can promote the assembly of monomers into filaments (nucleation) as well as sever filaments already formed. Plays a role in ciliogenesis. In Bos taurus (Bovine), this protein is Gelsolin (GSN).